Here is a 488-residue protein sequence, read N- to C-terminus: Zinc metalloproteinase-disintegrin VMP-II (488 aa).

Positions 1–20 (MIQVLLVTICLAVFPYQGSS) are cleaved as a signal peptide. Residues 21 to 191 (IILESGNVND…KASQSNIPPE (171 aa)) constitute a propeptide that is removed on maturation. Positions 198 to 396 (RYIELVVVAD…STTRCLHNEP (199 aa)) constitute a Peptidase M12B domain. Residues Glu201 and Asp285 each contribute to the Ca(2+) site. An N-linked (GlcNAc...) asparagine glycan is attached at Asn296. 3 cysteine pairs are disulfide-bonded: Cys309–Cys391, Cys349–Cys373, and Cys351–Cys356. His334 contributes to the Zn(2+) binding site. Residue Glu335 is part of the active site. 2 residues coordinate Zn(2+): His338 and His344. Residues Cys391, Asn394, Asn409, Glu413, Glu416, and Asp419 each contribute to the Ca(2+) site. The Disintegrin domain maps to 404 to 488 (PPFCGNYFKE…ADCPRNGLYG (85 aa)). 7 disulfides stabilise this stretch: Cys407–Cys426, Cys418–Cys436, Cys420–Cys431, Cys430–Cys453, Cys444–Cys450, Cys449–Cys474, and Cys462–Cys481. The short motif at 466 to 468 (RGD) is the Cell attachment site element.

It belongs to the venom metalloproteinase (M12B) family. P-II subfamily. P-IIb sub-subfamily. In terms of assembly, homodimer; disulfide-linked (disintegrin). Zn(2+) serves as cofactor. Expressed by the venom gland.

It localises to the secreted. In terms of biological role, zinc metalloproteinase-disintegrin VMP-II: inhibits ADP-induced platelet aggregation (probably by binding integrin alpha-IIb/beta-3 (ITGA2B/ITGB3)) and degrades fibrinogen. Functionally, recombinant disintegrin r-Cam-dis (413-488): this recombinant protein inhibits platelet adhesion to fibrinogen (IC(50) is 1 nM), inhibits collagen- (IC(50) is 18 nM) and ADP-induced (IC(50) is 6 nM) platelet aggregation, and also inhibits platelet function on clot retraction. May act by binding integrin alpha-IIb/beta-3 (ITGA2B/ITGB3). In Crotalus adamanteus (Eastern diamondback rattlesnake), this protein is Zinc metalloproteinase-disintegrin VMP-II.